The chain runs to 986 residues: MRVNEKYSTLPAEDRSVHIINICAIEDIGYLPSEGTLLNSLSVDPDAECKYGLYFRDGRRKVDYILVYHHKRPSGNRTLVRRVQHSDTPSGARSVKQDHPLPGKGASLDAGSGEPPMDYHEDDKRFRREEYEGNLLEAGLELERDEDTKIHGVGFVKIHAPWNVLCREAEFLKLKMPTKKMYHINETRGLLKKINSVLQKITDPIQPKVAEHRPQTMKRLSYPFSREKQHLFDLSDKDSFFDSKTRSTIVYEILKRTTCTKAKYSMGITSLLANGVYAAAYPLHDGDYNGENVEFNDRKLLYEEWARYGVFYKYQPIDLVRKYFGEKIGLYFAWLGVYTQMLIPASIVGIIVFLYGCATMDENIPSMEMCDQRHNITMCPLCDKTCSYWKMSSACATARASHLFDNPATVFFSVFMALWAATFMEHWKRKQMRLNYRWDLTGFEEEEEAVKDHPRAEYEARVLEKSLKKESRNKEKRRHIPEESTNKWKQRVKTAMAGVKLTDKVKLTWRDRFPAYLTNLVSIIFMIAVTFAIVLGVIIYRISMAAALAMNSSPSVRSNIRVTVTATAVIINLVVIILLDEVYGCIARWLTKIEVPKTEKSFEERLIFKAFLLKFVNSYTPIFYVAFFKGRFVGRPGDYVYIFRSFRMEECAPGGCLMELCIQLSIIMLGKQLIQNNLFEIGIPKMKKLIRYLKLKQQSPPDHEECVKRKQRYEVDYNLEPFAGLTPEYMEMIIQFGFVTLFVASFPLAPLFALLNNIIEIRLDAKKFVTELRRPVAVRAKDIGIWYNILRGIGKLAVIINAFVISFTSDFIPRLVYLYMYSKNGTMHGFVNHTLSSFNVSDFQNGTAPNDPLDLGYEVQICRYKDYREPPWSENKYDISKDFWAVLAARLAFVIVFQNLVMFMSDFVDWVIPDIPKDISQQIHKEKVLMVELFMREEQDKQQLLETWMEKERQKDEPPCNHHNTKACPDSLGSPAPSHAYHGGVL.

Topologically, residues 1-333 are cytoplasmic; it reads MRVNEKYSTL…FGEKIGLYFA (333 aa). The disordered stretch occupies residues 79-121; that stretch reads LVRRVQHSDTPSGARSVKQDHPLPGKGASLDAGSGEPPMDYHE. A phosphoserine mark is found at Ser107 and Ser196. A helical transmembrane segment spans residues 334-354; it reads WLGVYTQMLIPASIVGIIVFL. Residues 355–406 lie on the Extracellular side of the membrane; the sequence is YGCATMDENIPSMEMCDQRHNITMCPLCDKTCSYWKMSSACATARASHLFDN. 4 disulfide bridges follow: Cys370-Cys395, Cys379-Cys862, Cys382-Cys386, and Cys651-Cys656. A helical transmembrane segment spans residues 407–427; that stretch reads PATVFFSVFMALWAATFMEHW. Glu425 provides a ligand contact to Ca(2+). Over 428 to 519 the chain is Cytoplasmic; it reads KRKQMRLNYR…RDRFPAYLTN (92 aa). Residues 520-540 form a helical membrane-spanning segment; the sequence is LVSIIFMIAVTFAIVLGVIIY. The Extracellular portion of the chain corresponds to 541–568; the sequence is RISMAAALAMNSSPSVRSNIRVTVTATA. Residues 569 to 589 form a helical membrane-spanning segment; the sequence is VIINLVVIILLDEVYGCIARW. Residues 590–607 are Cytoplasmic-facing; that stretch reads LTKIEVPKTEKSFEERLI. Residues 608 to 628 form a helical membrane-spanning segment; sequence FKAFLLKFVNSYTPIFYVAFF. Residues 629 to 657 are Extracellular-facing; that stretch reads KGRFVGRPGDYVYIFRSFRMEECAPGGCL. Residues 658 to 678 form a helical membrane-spanning segment; the sequence is MELCIQLSIIMLGKQLIQNNL. Positions 677, 680, 728, 731, 760, and 764 each coordinate Ca(2+). The Cytoplasmic segment spans residues 679 to 725; sequence FEIGIPKMKKLIRYLKLKQQSPPDHEECVKRKQRYEVDYNLEPFAGL. Transmembrane regions (helical) follow at residues 726–746 and 747–767; these read TPEY…VASF and PLAP…DAKK. The Cytoplasmic segment spans residues 768-784; the sequence is FVTELRRPVAVRAKDIG. Residues 785-805 traverse the membrane as a helical segment; sequence IWYNILRGIGKLAVIINAFVI. Residues 806–892 are Extracellular-facing; sequence SFTSDFIPRL…FWAVLAARLA (87 aa). N-linked (GlcNAc...) asparagine glycosylation is present at Asn832. The chain crosses the membrane as a helical span at residues 893-913; the sequence is FVIVFQNLVMFMSDFVDWVIP. Residues Asp909 and Asp914 each contribute to the Ca(2+) site. Residues 914-986 lie on the Cytoplasmic side of the membrane; that stretch reads DIPKDISQQI…PSHAYHGGVL (73 aa). Over residues 951–960 the composition is skewed to basic and acidic residues; that stretch reads KERQKDEPPC. The segment at 951–986 is disordered; that stretch reads KERQKDEPPCNHHNTKACPDSLGSPAPSHAYHGGVL.

The protein belongs to the anoctamin family. As to quaternary structure, homodimer. Interacts with CFTR. Interacts with TRPV4. As to expression, expressed in nasal epithelial cells (at protein level). In the kidney, expressed in the collecting duct (at protein level). Broadly expressed with higher levels in liver, skeletal muscle and gastrointestinal muscles. Expressed in eccrine sweat glands.

The protein resides in the apical cell membrane. It localises to the presynapse. It carries out the reaction chloride(in) = chloride(out). With respect to regulation, ATP and calmodulin are essential for its activation. Channel activity is inhibited by CFTR protein and by chloride inhibitors such as niflumic acid (NFA) and 4,4'-diisothiocyanatostilbene-2,2'-disulfonic acid (DIDS). Activated by heat with activation seen at temperatures above 44 degrees Celsius. Activated by BDNF in radial glial cells. Its function is as follows. Calcium-activated chloride channel (CaCC). Plays a role in transepithelial anion transport and smooth muscle contraction. Required for the normal functioning of the interstitial cells of Cajal (ICCs) which generate electrical pacemaker activity in gastrointestinal smooth muscles. Acts as a major contributor to basal and stimulated chloride conductance in airway epithelial cells and plays an important role in tracheal cartilage development. Required for CFTR activation by enhancing endoplasmic reticulum Ca(2+) store release and is also required for CFTR membrane expression. Required for basal and ATP-dependent mucus secretion in airways and intestine, probably by controlling exocytosis of mucus-filled granules by providing Ca(2+) to an apical signaling compartment. Contributes to airway mucus expression induced by interleukins IL3 and IL8 and by the asthma-associated protein CLCA1 and is required for expression of mucin MUC5AC. However, was shown in another study not to be required for MUC5AC expression. Plays a role in the propagation of Ca(2+) waves in Kolliker's organ in the cochlea and contributes to the refinement of auditory brainstem circuitries prior to hearing onset. In vomeronasal sensory neurons, modulates spontaneous firing patterns in the absence of stimuli as well as the firing pattern of pheromone-evoked activity. Responsible for calcium-activated chloride channel activity in type I taste cells of the vallate papillae. Acts as a heat sensor in nociceptive neurons. In dorsal root ganglion neurons, plays a role in mediating non-histaminergic Mas-related G-protein coupled receptor (MRGPR)-dependent itching, acting as a downstream effector of MRGPRs. In the developing brain, required for the Ca(2+)-dependent process extension of radial glial cells. Calcium-activated chloride channel (CaCC). Contributes to calcium-activated chloride secretion in human sweat gland epithelial cells. Shows increased basal chloride permeability and decreased Ca(2+)-induced chloride permeability. In terms of biological role, calcium-activated chloride channel (CaCC). Shows increased sensitivity to intracellular Ca(2+). This Homo sapiens (Human) protein is Anoctamin-1 (ANO1).